A 247-amino-acid polypeptide reads, in one-letter code: UDP-2,3-diacylglucosamine hydrolase (247 aa).

5 residues coordinate Mn(2+): aspartate 8, histidine 10, aspartate 41, asparagine 79, and histidine 115. Substrate is bound at residue 79-80 (NH). Positions 123, 165, 168, and 196 each coordinate substrate. Mn(2+) contacts are provided by histidine 196 and histidine 198.

It belongs to the LpxH family. The cofactor is Mn(2+).

Its subcellular location is the cell inner membrane. It carries out the reaction UDP-2-N,3-O-bis[(3R)-3-hydroxytetradecanoyl]-alpha-D-glucosamine + H2O = 2-N,3-O-bis[(3R)-3-hydroxytetradecanoyl]-alpha-D-glucosaminyl 1-phosphate + UMP + 2 H(+). It functions in the pathway glycolipid biosynthesis; lipid IV(A) biosynthesis; lipid IV(A) from (3R)-3-hydroxytetradecanoyl-[acyl-carrier-protein] and UDP-N-acetyl-alpha-D-glucosamine: step 4/6. Hydrolyzes the pyrophosphate bond of UDP-2,3-diacylglucosamine to yield 2,3-diacylglucosamine 1-phosphate (lipid X) and UMP by catalyzing the attack of water at the alpha-P atom. Involved in the biosynthesis of lipid A, a phosphorylated glycolipid that anchors the lipopolysaccharide to the outer membrane of the cell. The polypeptide is UDP-2,3-diacylglucosamine hydrolase (Blochmanniella floridana).